A 525-amino-acid polypeptide reads, in one-letter code: Zinc finger protein 678 (525 aa).

14 consecutive C2H2-type zinc fingers follow at residues 97-119 (FQCI…KRIH), 125-147 (YKCE…KRIH), 153-175 (YKCD…KKIH), 181-203 (YKCD…KKIH), 209-231 (YPCE…KRIH), 237-259 (YKCK…KRIH), 265-287 (YKCE…RRIH), 293-315 (YKCE…KRIH), 321-343 (YQCE…KRIH), 349-371 (YKCE…KRIH), 377-399 (YKCK…RRIH), 405-427 (YKCE…KRIH), 433-455 (YKCK…KRIH), and 461-483 (YKCE…KRIH). Residues 489–511 (YKCKECGKGFYQSSIHSKYKRIY) form a C2H2-type 15; degenerate zinc finger.

Belongs to the krueppel C2H2-type zinc-finger protein family.

It is found in the nucleus. Functionally, may be involved in transcriptional regulation. This chain is Zinc finger protein 678 (ZNF678), found in Homo sapiens (Human).